The sequence spans 146 residues: Kappa-casein (146 aa).

Threonine 97, threonine 107, threonine 112, and threonine 118 each carry an O-linked (GalNAc...) threonine glycan. Threonine 121 is modified (phosphothreonine). Serine 125 is modified (phosphoserine; alternate). O-linked (GalNAc...) serine; alternate glycosylation occurs at serine 125. Threonine 142 carries an O-linked (GalNAc...) threonine glycan. Serine 143 carries the post-translational modification Phosphoserine.

It belongs to the kappa-casein family. Mammary gland specific. Secreted in milk.

It is found in the secreted. Kappa-casein stabilizes micelle formation, preventing casein precipitation in milk. The chain is Kappa-casein (CSN3) from Panthera uncia (Snow leopard).